A 680-amino-acid chain; its full sequence is WD repeat-containing protein 48 homolog (680 aa).

WD repeat units follow at residues 26-65 (QHRN…SEKY), 71-110 (HHND…CMST), 113-152 (THRD…ALTA), 164-203 (GSKD…RSMK), 206-245 (GHTE…CVQT), 248-287 (VHKE…NKTL), 290-329 (EEQA…RCTM), and 350-389 (KGGA…KKEQ). Residues 592–616 (ETTPSGGNANNSLQNSQSDANSEGS) form a disordered region.

This sequence belongs to the WD repeat WDR48 family. In terms of assembly, catalytic component of the Usp12-46 deubiquitylase complex consisting of Usp12-46, Wdr20 and Uaf1; regulatory subunit that, together wtih Wdr20, stabilizes Usp12-46. The Usp12-46 deubiquitylase complex associates with arr/arrow; the interaction leads to deubiquitination and stabilization of arr/arrow.

Functionally, regulatory component of the Usp12-46 deubiquitylase complex. activates deubiquitination by increasing the catalytic turnover without increasing the affinity of deubiquitinating enzymes for the substrate. The complex deubiquitylates the wg/wingless-signaling receptor arr/arrow, which stabilizes the receptor and increases its concentration at the cell surface; this enhances the sensitivity of cells to wg/wingless-signal stimulation. This increases the amplitude and spatial range of the signaling response to the wg/wingless morphogen gradient, facilitating the precise concentration-dependent regulation of its target genes. Together with Wdr20 and Usp12-46 required for wg/wingless-mediated signaling in the wing imaginal disc and for wg/wingless-dependent regulation of intestinal stem cell proliferation. This Drosophila erecta (Fruit fly) protein is WD repeat-containing protein 48 homolog.